Reading from the N-terminus, the 741-residue chain is Alpha-1,6-mannosylglycoprotein 6-beta-N-acetylglucosaminyltransferase A (741 aa).

Topologically, residues M1–K13 are cytoplasmic. A helical; Signal-anchor for type II membrane protein membrane pass occupies residues L14 to L30. Residues H31–L741 are Lumenal-facing. N-linked (GlcNAc...) asparagine glycosylation is found at N110, N115, and N118. Disulfide bonds link C145–C183, C156–C196, C172–C338, C372–C626, C649–C724, C653–C726, C660–C713, C681–C702, and C737–C740. The tract at residues N213–L741 is sufficient for catalytic activity. The segment at K264–K269 is important for activity in FGF2 release. An N-linked (GlcNAc...) asparagine glycan is attached at N334. Position 378–379 (D378–S379) interacts with substrate. N433 and N447 each carry an N-linked (GlcNAc...) asparagine glycan. Residue E526 participates in UDP-N-acetyl-alpha-D-glucosamine binding. K554 serves as a coordination point for substrate.

Belongs to the glycosyltransferase 18 family. Post-translationally, N-glycosylated. In terms of processing, a secreted form is released from the membrane after cleavage by gamma-secretase.

The protein resides in the golgi apparatus membrane. Its subcellular location is the secreted. The enzyme catalyses N(4)-{beta-D-GlcNAc-(1-&gt;2)-[beta-D-GlcNAc-(1-&gt;4)]-alpha-D-Man-(1-&gt;3)-[beta-D-GlcNAc-(1-&gt;2)-alpha-D-Man-(1-&gt;6)]-beta-D-Man-(1-&gt;4)-beta-D-GlcNAc-(1-&gt;4)-beta-D-GlcNAc}-L-asparaginyl-[protein] + UDP-N-acetyl-alpha-D-glucosamine = N(4)-{beta-D-GlcNAc-(1-&gt;2)-[beta-D-GlcNAc-(1-&gt;4)]-alpha-D-Man-(1-&gt;3)-[beta-D-GlcNAc-(1-&gt;2)-[beta-D-GlcNAc-(1-&gt;6)]-alpha-D-Man-(1-&gt;6)]-beta-D-Man-(1-&gt;4)-beta-D-GlcNAc-(1-&gt;4)-beta-D-GlcNAc}-L-asparaginyl-[protein] + UDP + H(+). Its pathway is protein modification; protein glycosylation. Activity is increased by Mn(2+) and Mg(2+). Functionally, catalyzes the addition of N-acetylglucosamine (GlcNAc) in beta 1-6 linkage to the alpha-linked mannose of biantennary N-linked oligosaccharides. Catalyzes an important step in the biosynthesis of branched, complex-type N-glycans, such as those found on EGFR, TGFR (TGF-beta receptor) and CDH2. Via its role in the biosynthesis of complex N-glycans, plays an important role in the activation of cellular signaling pathways, reorganization of the actin cytoskeleton, cell-cell adhesion and cell migration. MGAT5-dependent EGFR N-glycosylation enhances the interaction between EGFR and LGALS3 and thereby prevents rapid EGFR endocytosis and prolongs EGFR signaling. Required for efficient interaction between TGFB1 and its receptor. Enhances activation of intracellular signaling pathways by several types of growth factors, including FGF2, PDGF, IGF, TGFB1 and EGF. MGAT5-dependent CDH2 N-glycosylation inhibits CDH2-mediated homotypic cell-cell adhesion and contributes to the regulation of downstream signaling pathways. Promotes cell migration. Contributes to the regulation of the inflammatory response. MGAT5-dependent TCR N-glycosylation enhances the interaction between TCR and LGALS3, limits agonist-induced TCR clustering, and thereby dampens TCR-mediated responses to antigens. Required for normal leukocyte evasation and accumulation at sites of inflammation. Inhibits attachment of monocytes to the vascular endothelium and subsequent monocyte diapedesis. Promotes proliferation of umbilical vein endothelial cells and angiogenesis, at least in part by promoting the release of the growth factor FGF2 from the extracellular matrix. This Homo sapiens (Human) protein is Alpha-1,6-mannosylglycoprotein 6-beta-N-acetylglucosaminyltransferase A (MGAT5).